A 1062-amino-acid chain; its full sequence is Platelet-derived growth factor receptor alpha (1062 aa).

The N-terminal stretch at 1–27 is a signal peptide; sequence MFPPSSAPLLLPQLEELVVPLHTAFTL. Ig-like C2-type domains follow at residues 28–96, 91–184, 190–281, 287–381, and 389–493; these read TCQG…VYVP, IYVY…VHGW, LHVE…KQIA, SEFM…RTVS, and PAVI…IKLV. The Extracellular portion of the chain corresponds to 28–504; it reads TCQGEATIAW…NGPHPELTVA (477 aa). Cysteine 29 and cysteine 74 are disulfide-bonded. N-linked (GlcNAc...) asparagine glycosylation is found at asparagine 79 and asparagine 132. Intrachain disulfides connect cysteine 124–cysteine 165 and cysteine 211–cysteine 265. N-linked (GlcNAc...) asparagine glycans are attached at residues asparagine 273, asparagine 333, asparagine 366, asparagine 433, and asparagine 444. Cysteines 410 and 477 form a disulfide. The chain crosses the membrane as a helical span at residues 505–525; that stretch reads AAVLVLLVIVIISLIVLVVIW. Residues 526-1062 are Cytoplasmic-facing; the sequence is KQKPRYEIRW…CSDLVEDSFL (537 aa). 2 positions are modified to phosphotyrosine; by autocatalysis: tyrosine 548 and tyrosine 550. The Protein kinase domain maps to 569–945; the sequence is LVLGRILGSG…HYERVNHEFL (377 aa). ATP contacts are provided by residues 575 to 583 and lysine 603; that span reads LGSGAFGKV. 5 positions are modified to phosphotyrosine; by autocatalysis: tyrosine 697, tyrosine 708, tyrosine 719, tyrosine 731, and tyrosine 739. The disordered stretch occupies residues 734–754; that stretch reads LQGSNYDHPPSQKGSNDGEMD. Catalysis depends on aspartate 793, which acts as the Proton acceptor. Phosphotyrosine; by autocatalysis occurs at positions 824 and 963. Residues 975–986 show a composition bias toward basic and acidic residues; that stretch reads KDRESGFDEQRL. Residues 975-1034 are disordered; it reads KDRESGFDEQRLSSDSGYIIPLPDLDPISDEEYGKRNRHSSQTSEESAIETGSSSSTFAK. The residue at position 992 (tyrosine 992) is a Phosphotyrosine; by autocatalysis. Over residues 1014–1032 the composition is skewed to polar residues; that stretch reads SSQTSEESAIETGSSSSTF.

This sequence belongs to the protein kinase superfamily. Tyr protein kinase family. CSF-1/PDGF receptor subfamily. As to quaternary structure, interacts with homodimeric pdgfa, pdgfb and pdgfc, and with heterodimers formed by pdgfa and pdgfb. monomer in the absence of bound ligand. Interaction with dimeric pdgfa, pdgfb and/or pdgfc leads to receptor dimerization, where both pdgfra homodimers and heterodimers with pdgfrb are observed. Ubiquitinated, leading to its degradation. In terms of processing, autophosphorylated on tyrosine residues upon ligand binding. Autophosphorylation occurs in trans, i.e. one subunit of the dimeric receptor phosphorylates tyrosine residues on the other subunit.

It localises to the cell membrane. The catalysed reaction is L-tyrosyl-[protein] + ATP = O-phospho-L-tyrosyl-[protein] + ADP + H(+). Present in an inactive conformation in the absence of bound ligand. Binding of pdgfa and/or pdgfb leads to dimerization and activation by autophosphorylation on tyrosine residues. Functionally, tyrosine-protein kinase that acts as a cell-surface receptor for pdgfa, pdgfb and pdgfc and plays an essential role in the regulation of embryonic development, cell proliferation, survival and chemotaxis. Depending on the context, promotes or inhibits cell proliferation and cell migration. Plays an important role in the differentiation of bone marrow-derived mesenchymal stem cells. Required for normal skeleton development. Required for normal development of the gastrointestinal tract. Plays a role in cell migration and chemotaxis in wound healing. Plays a role in platelet activation, secretion of agonists from platelet granules, and in thrombin-induced platelet aggregation. Binding of its cognate ligands - homodimeric pdgfa, homodimeric pdgfb, heterodimers formed by pdgfa and pdgfb or homodimeric pdgfc -leads to the activation of several signaling cascades; the response depends on the nature of the bound ligand and is modulated by the formation of heterodimers between pdgfra and pdgfrb. Phosphorylates pik3r1, plcg1, and ptpn11. Activation of plcg1 leads to the production of the cellular signaling molecules diacylglycerol and inositol 1,4,5-trisphosphate, mobilization of cytosolic Ca(2+) and the activation of protein kinase C. Phosphorylates pik3r1, the regulatory subunit of phosphatidylinositol 3-kinase, and thereby mediates activation of the AKT1 signaling pathway. Mediates activation of hras and of the MAP kinases mapk1/erk2 and/or mapk3/erk1. Promotes activation of STAT family members stat1, stat3 and stat5a and/or stat5b. Receptor signaling is down-regulated by protein phosphatases that dephosphorylate the receptor and its down-stream effectors, and by rapid internalization of the activated receptor. This Takifugu rubripes (Japanese pufferfish) protein is Platelet-derived growth factor receptor alpha (pdgfra).